Reading from the N-terminus, the 919-residue chain is Isoleucine--tRNA ligase (919 aa).

Residues 57-67 (PYANGHIHIGT) carry the 'HIGH' region motif. Residue E553 coordinates L-isoleucyl-5'-AMP. The short motif at 594–598 (KMSKS) is the 'KMSKS' region element. Position 597 (K597) interacts with ATP. The Zn(2+) site is built by C887, C890, C907, and C910.

Belongs to the class-I aminoacyl-tRNA synthetase family. IleS type 1 subfamily. As to quaternary structure, monomer. Zn(2+) is required as a cofactor.

It is found in the cytoplasm. The catalysed reaction is tRNA(Ile) + L-isoleucine + ATP = L-isoleucyl-tRNA(Ile) + AMP + diphosphate. Its function is as follows. Catalyzes the attachment of isoleucine to tRNA(Ile). As IleRS can inadvertently accommodate and process structurally similar amino acids such as valine, to avoid such errors it has two additional distinct tRNA(Ile)-dependent editing activities. One activity is designated as 'pretransfer' editing and involves the hydrolysis of activated Val-AMP. The other activity is designated 'posttransfer' editing and involves deacylation of mischarged Val-tRNA(Ile). The sequence is that of Isoleucine--tRNA ligase from Thermotoga petrophila (strain ATCC BAA-488 / DSM 13995 / JCM 10881 / RKU-1).